Reading from the N-terminus, the 520-residue chain is Protein root UVB sensitive 4 (520 aa).

Transmembrane regions (helical) follow at residues 275-295 (IQTV…NMLF) and 301-321 (LQAC…LLGI).

The protein belongs to the RUS1 family.

The protein resides in the membrane. The polypeptide is Protein root UVB sensitive 4 (Arabidopsis thaliana (Mouse-ear cress)).